Here is a 463-residue protein sequence, read N- to C-terminus: L-seryl-tRNA(Sec) selenium transferase (463 aa).

Lys295 is subject to N6-(pyridoxal phosphate)lysine.

It belongs to the SelA family. In terms of assembly, homodecamer; pentamer of dimers. Binds only one seryl-tRNA(Sec) per dimer. Pyridoxal 5'-phosphate serves as cofactor.

The protein localises to the cytoplasm. It catalyses the reaction L-seryl-tRNA(Sec) + selenophosphate + H(+) = L-selenocysteinyl-tRNA(Sec) + phosphate. It functions in the pathway aminoacyl-tRNA biosynthesis; selenocysteinyl-tRNA(Sec) biosynthesis; selenocysteinyl-tRNA(Sec) from L-seryl-tRNA(Sec) (bacterial route): step 1/1. Converts seryl-tRNA(Sec) to selenocysteinyl-tRNA(Sec) required for selenoprotein biosynthesis. The chain is L-seryl-tRNA(Sec) selenium transferase from Escherichia coli O81 (strain ED1a).